Consider the following 264-residue polypeptide: Putative hydro-lyase cgR_2449 (264 aa).

Belongs to the D-glutamate cyclase family.

This Corynebacterium glutamicum (strain R) protein is Putative hydro-lyase cgR_2449.